A 314-amino-acid polypeptide reads, in one-letter code: uncharacterized protein (314 aa).

The N-terminal stretch at 1–18 is a signal peptide; that stretch reads MLIQILFLIILTLNCSYS. N68, N72, N106, and N256 each carry an N-linked (GlcNAc...) asparagine glycan.

The protein resides in the secreted. This is an uncharacterized protein from Caenorhabditis elegans.